The chain runs to 460 residues: Chromosomal replication initiator protein DnaA (460 aa).

The interval 1-84 is domain I, interacts with DnaA modulators; sequence MAVSLWQQCI…RFDIGSRPSA (84 aa). The domain II stretch occupies residues 84-123; sequence AKKPEPAPVAAVRVPNPQTKASVGTSFNTTEPVANTNHRS. Positions 103–123 are disordered; the sequence is KASVGTSFNTTEPVANTNHRS. The tract at residues 124–340 is domain III, AAA+ region; sequence NINPTYQFDN…GALNRVIANA (217 aa). Residues glycine 168, glycine 170, lysine 171, and threonine 172 each contribute to the ATP site. A domain IV, binds dsDNA region spans residues 341–460; the sequence is NFTGRPITID…YANLIRTLSS (120 aa).

Belongs to the DnaA family. As to quaternary structure, oligomerizes as a right-handed, spiral filament on DNA at oriC.

It is found in the cytoplasm. Functionally, plays an essential role in the initiation and regulation of chromosomal replication. ATP-DnaA binds to the origin of replication (oriC) to initiate formation of the DNA replication initiation complex once per cell cycle. Binds the DnaA box (a 9 base pair repeat at the origin) and separates the double-stranded (ds)DNA. Forms a right-handed helical filament on oriC DNA; dsDNA binds to the exterior of the filament while single-stranded (ss)DNA is stabiized in the filament's interior. The ATP-DnaA-oriC complex binds and stabilizes one strand of the AT-rich DNA unwinding element (DUE), permitting loading of DNA polymerase. After initiation quickly degrades to an ADP-DnaA complex that is not apt for DNA replication. Binds acidic phospholipids. The chain is Chromosomal replication initiator protein DnaA from Shewanella sp. (strain MR-4).